We begin with the raw amino-acid sequence, 100 residues long: Large ribosomal subunit protein uL23 (100 aa).

The protein belongs to the universal ribosomal protein uL23 family. Part of the 50S ribosomal subunit. Contacts protein L29, and trigger factor when it is bound to the ribosome.

Functionally, one of the early assembly proteins it binds 23S rRNA. One of the proteins that surrounds the polypeptide exit tunnel on the outside of the ribosome. Forms the main docking site for trigger factor binding to the ribosome. The protein is Large ribosomal subunit protein uL23 of Shigella dysenteriae serotype 1 (strain Sd197).